The following is a 169-amino-acid chain: Peptide methionine sulfoxide reductase MsrA (169 aa).

Cys10 is a catalytic residue.

The protein belongs to the MsrA Met sulfoxide reductase family.

It catalyses the reaction L-methionyl-[protein] + [thioredoxin]-disulfide + H2O = L-methionyl-(S)-S-oxide-[protein] + [thioredoxin]-dithiol. The enzyme catalyses [thioredoxin]-disulfide + L-methionine + H2O = L-methionine (S)-S-oxide + [thioredoxin]-dithiol. In terms of biological role, has an important function as a repair enzyme for proteins that have been inactivated by oxidation. Catalyzes the reversible oxidation-reduction of methionine sulfoxide in proteins to methionine. The polypeptide is Peptide methionine sulfoxide reductase MsrA (Streptococcus equi subsp. equi (strain 4047)).